Here is a 386-residue protein sequence, read N- to C-terminus: Phosphatidyl-myo-inositol mannosyltransferase (386 aa).

The GDP-alpha-D-mannose site is built by tyrosine 9 and glycine 16. A 1,2-diacyl-sn-glycero-3-phospho-(1D-myo-inositol) contacts are provided by residues glutamine 18, 62–63, and arginine 68; that span reads YN. GDP-alpha-D-mannose contacts are provided by residues arginine 196, 201 to 202, 251 to 253, lysine 256, 274 to 278, and glutamate 282; these read RK, VDD, and ESFGI.

Belongs to the glycosyltransferase group 1 family. Glycosyltransferase 4 subfamily. In terms of assembly, monomer. Requires Mg(2+) as cofactor.

Its subcellular location is the cell membrane. The enzyme catalyses a 1,2-diacyl-sn-glycero-3-phospho-(1D-myo-inositol) + GDP-alpha-D-mannose = a 1,2-diacyl-sn-glycero-3-phospho-[alpha-D-mannopyranosyl-(1&lt;-&gt;6)-D-myo-inositol] + GDP + H(+). It participates in phospholipid metabolism; phosphatidylinositol metabolism. Functionally, involved in the biosynthesis of phosphatidyl-myo-inositol mannosides (PIM) which are early precursors in the biosynthesis of lipomannans (LM) and lipoarabinomannans (LAM). Catalyzes the addition of a mannosyl residue from GDP-D-mannose (GDP-Man) to the position 2 of the carrier lipid phosphatidyl-myo-inositol (PI) to generate a phosphatidyl-myo-inositol bearing an alpha-1,2-linked mannose residue (PIM1). In contrary to PimB, the mannosyltransferase PimA is unable to transfer a mannose residue to the position 6 of the phosphatidyl-myo-inositol of PIM1. This Mycolicibacterium smegmatis (strain ATCC 700084 / mc(2)155) (Mycobacterium smegmatis) protein is Phosphatidyl-myo-inositol mannosyltransferase.